We begin with the raw amino-acid sequence, 188 residues long: MATIIQAKDLRAGHTFLYKGSIYQVIENSFNKTAMREGIVKCKVKNLRTGAITVEVLTGEKVEQAIIEKSKMTFSYDDGSGYVFMDNETYEQISIPYNQLSWEKNFIEEGTEVSVMRYDGELMGVSLPDQLVVTIVEAEEAVQGNSVQNATKRAWLASKWEFQVPQFIKSGEKVIINPSNGQYVGRAK.

Belongs to the elongation factor P family.

It localises to the cytoplasm. It participates in protein biosynthesis; polypeptide chain elongation. Involved in peptide bond synthesis. Stimulates efficient translation and peptide-bond synthesis on native or reconstituted 70S ribosomes in vitro. Probably functions indirectly by altering the affinity of the ribosome for aminoacyl-tRNA, thus increasing their reactivity as acceptors for peptidyl transferase. The polypeptide is Elongation factor P (Ureaplasma urealyticum serovar 10 (strain ATCC 33699 / Western)).